Here is a 123-residue protein sequence, read N- to C-terminus: Small ribosomal subunit protein uS12cz/uS12cy (123 aa).

Belongs to the universal ribosomal protein uS12 family. As to quaternary structure, part of the 30S ribosomal subunit.

It is found in the plastid. The protein resides in the chloroplast. Functionally, with S4 and S5 plays an important role in translational accuracy. Located at the interface of the 30S and 50S subunits. This is Small ribosomal subunit protein uS12cz/uS12cy (rps12-A) from Phaseolus vulgaris (Kidney bean).